We begin with the raw amino-acid sequence, 525 residues long: Packaging protein UL32 homolog (525 aa).

Over residues 1 to 12 (MAHKVTSANEPN) the composition is skewed to polar residues. Positions 1–20 (MAHKVTSANEPNPLTGKRLS) are disordered. Zn(2+)-binding residues include C95, C98, H173, C179, C255, C256, C357, C360, H427, C434, C473, and H510. Zinc finger regions lie at residues 95–179 (CRVC…ICRC), 255–510 (CCHL…LRIH), and 357–434 (CPLC…DPLC).

Belongs to the herpesviridae UL32 protein family.

The protein resides in the host cytoplasm. Its subcellular location is the host nucleus. Plays a role in efficient localization of neo-synthesized capsids to nuclear replication compartments, thereby controlling cleavage and packaging of virus genomic DNA. The sequence is that of Packaging protein UL32 homolog from Epstein-Barr virus (strain B95-8) (HHV-4).